Consider the following 122-residue polypeptide: Probable F-box protein At4g23960 (122 aa).

One can recognise an F-box domain in the interval 1–45; sequence MIEQLFPEVTCYALRYLDYSSLCQLSMTSSSMRKTANDDVLWRAL.

The chain is Probable F-box protein At4g23960 from Arabidopsis thaliana (Mouse-ear cress).